Here is a 198-residue protein sequence, read N- to C-terminus: Carnitine operon protein CaiE (198 aa).

The disordered stretch occupies residues 179 to 198 (VEENRPRLKGTTDVKPKSAQ). The span at 180–198 (EENRPRLKGTTDVKPKSAQ) shows a compositional bias: basic and acidic residues.

The protein belongs to the transferase hexapeptide repeat family.

Its pathway is amine and polyamine metabolism; carnitine metabolism. In terms of biological role, overproduction of CaiE stimulates the activity of CaiB and CaiD. This chain is Carnitine operon protein CaiE, found in Salmonella choleraesuis (strain SC-B67).